A 131-amino-acid polypeptide reads, in one-letter code: Inactive protein FON2 SPARE1 (131 aa).

Residues serine 67 to histidine 131 are disordered. Over residues arginine 76–arginine 97 the composition is skewed to basic residues.

The protein belongs to the CLV3/ESR signal peptide family. As to expression, expressed in all aerial apical meristems, including the floral and inflorescence meristems in the reproductive phase and the shoot apical meristem in the vegetative phase. Also detected in the primordia of lateral organs such as the leaf and the floral organs.

Its function is as follows. Non functional suppressor of the fon2 mutation. In Oryza sativa subsp. japonica, the protein has a single amino acid substitution at the putative processing site of the signal peptide while in all the other varieties/species of domesticated and wild rice tested the protein is functional. The protein is Inactive protein FON2 SPARE1 (FOS1) of Oryza sativa subsp. japonica (Rice).